The chain runs to 339 residues: Retinol dehydrogenase 10-A (339 aa).

A helical; Signal-anchor transmembrane segment spans residues 3–23 (IFVEFFLVMLKVCWAIVMAGF). 40–64 (VITGAGGGLGRLFAKEFARRRATLV) contributes to the NADP(+) binding site. Ser-195 provides a ligand contact to substrate. Tyr-208 acts as the Proton acceptor in catalysis.

It belongs to the short-chain dehydrogenases/reductases (SDR) family.

It localises to the microsome membrane. The protein resides in the endoplasmic reticulum membrane. It carries out the reaction all-trans-retinol + NADP(+) = all-trans-retinal + NADPH + H(+). It functions in the pathway cofactor metabolism; retinol metabolism. Retinol dehydrogenase with a clear preference for NADP. Converts all-trans-retinol to all-trans-retinal. Has no detectable activity towards 11-cis-retinol, 9-cis-retinol and 13-cis-retinol. This Danio rerio (Zebrafish) protein is Retinol dehydrogenase 10-A (rdh10a).